The primary structure comprises 497 residues: MISNVPWLTVIVSLPIFAGLMIPILPRNGNRVTRWYTLGICILEFLLITYIFYCHFRIDYQSIQLLETFNWINNIHLHWSLGIDGLSLGLVILTGFATTLATLSAWPITRNTRLFYFLMLIMYGGQIGLFVSRDILLFFFMWEIELIPVYLLLCLWGGKRRLYSATKFVLYTAGGSIFLLVAALTMSFYGSEVPSFNIQDLIHKSYPLSLEVLIYVGFLVAYAVKLPIFPFHTWLPDTHGEAHYSTCMLLAGVLLKMGGYGLIRINLELLTHAHFLLGSWMMLFGAIQIIYASLISMSQRNFKRRIAYSSISHMGFVTIGIGSFTETGINGAILQMISHGLIGAALFFLAGTCYDRTRTYLLDQLGGAAISMPKLFTMFSTLSLASLALPGMSGFVSELLVFLGVVTSNQYSFAFKAGITVLEGIGTVLTPIYLLSMLRQLFYGYRFFDKSNPYSIDLGPRELFILICFLLPILGIGLYPNLILSIGSTEIPSLPLT.

14 helical membrane passes run 5-25 (VPWLTVIVSLPIFAGLMIPIL), 36-56 (YTLGICILEFLLITYIFYCHF), 88-108 (LGLVILTGFATTLATLSAWPI), 112-132 (TRLFYFLMLIMYGGQIGLFVS), 135-155 (ILLFFFMWEIELIPVYLLLCL), 168-188 (FVLYTAGGSIFLLVAALTMSF), 212-232 (VLIYVGFLVAYAVKLPIFPFH), 243-263 (HYSTCMLLAGVLLKMGGYGLI), 275-295 (FLLGSWMMLFGAIQIIYASLI), 306-326 (IAYSSISHMGFVTIGIGSFTE), 331-351 (GAILQMISHGLIGAALFFLAG), 387-407 (LALPGMSGFVSELLVFLGVVT), 418-438 (GITVLEGIGTVLTPIYLLSML), and 463-483 (LFILICFLLPILGIGLYPNLI).

Belongs to the complex I subunit 4 family.

The protein localises to the plastid. The protein resides in the chloroplast thylakoid membrane. The enzyme catalyses a plastoquinone + NADH + (n+1) H(+)(in) = a plastoquinol + NAD(+) + n H(+)(out). It catalyses the reaction a plastoquinone + NADPH + (n+1) H(+)(in) = a plastoquinol + NADP(+) + n H(+)(out). This chain is NAD(P)H-quinone oxidoreductase chain 4, chloroplastic, found in Adiantum capillus-veneris (Maidenhair fern).